Reading from the N-terminus, the 231-residue chain is Chromosome partition protein MukE (231 aa).

Positions 197 to 231 are disordered; that stretch reads RDGEAMPIEGGLSLDDSENDETSDNSAEGTGDEQP.

It belongs to the MukE family. In terms of assembly, interacts, and probably forms a ternary complex, with MukF and MukB. The complex formation is stimulated by calcium or magnesium.

Its subcellular location is the cytoplasm. It localises to the nucleoid. Involved in chromosome condensation, segregation and cell cycle progression. May participate in facilitating chromosome segregation by condensation DNA from both sides of a centrally located replisome during cell division. Probably acts via its interaction with MukB and MukF. This chain is Chromosome partition protein MukE, found in Photorhabdus laumondii subsp. laumondii (strain DSM 15139 / CIP 105565 / TT01) (Photorhabdus luminescens subsp. laumondii).